The sequence spans 85 residues: RNA-binding protein Hfq (85 aa).

One can recognise a Sm domain in the interval Asp-9–Phe-68.

The protein belongs to the Hfq family. Homohexamer.

In terms of biological role, RNA chaperone that binds small regulatory RNA (sRNAs) and mRNAs to facilitate mRNA translational regulation in response to envelope stress, environmental stress and changes in metabolite concentrations. Also binds with high specificity to tRNAs. In Shewanella frigidimarina (strain NCIMB 400), this protein is RNA-binding protein Hfq.